The following is a 30-amino-acid chain: Cytochrome b6/f complex 12.6 kDa peptide (30 aa).

The interval S1–G30 is disordered. A compositionally biased stretch (gly residues) spans K13–Y23.

The protein localises to the plastid. It is found in the chloroplast. Functionally, may be a component of the cytochrome b6/f complex which is part of the photosynthetic respiratory chain. This chain is Cytochrome b6/f complex 12.6 kDa peptide, found in Euglena gracilis.